The following is a 310-amino-acid chain: Haloalkane dehalogenase (310 aa).

Residues 30 to 140 (PVVLFLHGNP…PMPTWQDFHH (111 aa)) enclose the AB hydrolase-1 domain. The Nucleophile role is filled by aspartate 103. Glutamate 127 (proton donor) is an active-site residue. Catalysis depends on histidine 280, which acts as the Proton acceptor.

The protein belongs to the haloalkane dehalogenase family. Type 2 subfamily. Monomer.

The catalysed reaction is 1-haloalkane + H2O = a halide anion + a primary alcohol + H(+). Catalyzes hydrolytic cleavage of carbon-halogen bonds in halogenated aliphatic compounds, leading to the formation of the corresponding primary alcohols, halide ions and protons. The polypeptide is Haloalkane dehalogenase (Bradyrhizobium diazoefficiens (strain JCM 10833 / BCRC 13528 / IAM 13628 / NBRC 14792 / USDA 110)).